The following is a 190-amino-acid chain: Imidazoleglycerol-phosphate dehydratase (190 aa).

It belongs to the imidazoleglycerol-phosphate dehydratase family.

The protein resides in the cytoplasm. The enzyme catalyses D-erythro-1-(imidazol-4-yl)glycerol 3-phosphate = 3-(imidazol-4-yl)-2-oxopropyl phosphate + H2O. Its pathway is amino-acid biosynthesis; L-histidine biosynthesis; L-histidine from 5-phospho-alpha-D-ribose 1-diphosphate: step 6/9. The chain is Imidazoleglycerol-phosphate dehydratase from Sulfurimonas denitrificans (strain ATCC 33889 / DSM 1251) (Thiomicrospira denitrificans (strain ATCC 33889 / DSM 1251)).